The sequence spans 248 residues: Proteasome subunit alpha (248 aa).

Positions Leu229 to Glu248 are disordered.

Belongs to the peptidase T1A family. The 20S proteasome core is composed of 14 alpha and 14 beta subunits that assemble into four stacked heptameric rings, resulting in a barrel-shaped structure. The two inner rings, each composed of seven catalytic beta subunits, are sandwiched by two outer rings, each composed of seven alpha subunits. The catalytic chamber with the active sites is on the inside of the barrel. Has a gated structure, the ends of the cylinder being occluded by the N-termini of the alpha-subunits. Is capped by the proteasome-associated ATPase, ARC.

The protein localises to the cytoplasm. The protein operates within protein degradation; proteasomal Pup-dependent pathway. The formation of the proteasomal ATPase ARC-20S proteasome complex, likely via the docking of the C-termini of ARC into the intersubunit pockets in the alpha-rings, may trigger opening of the gate for substrate entry. Interconversion between the open-gate and close-gate conformations leads to a dynamic regulation of the 20S proteasome proteolysis activity. In terms of biological role, component of the proteasome core, a large protease complex with broad specificity involved in protein degradation. In Streptomyces scabiei (strain 87.22), this protein is Proteasome subunit alpha.